Here is a 548-residue protein sequence, read N- to C-terminus: Glutamate--tRNA ligase (548 aa).

Positions 102–112 (PSPSGPLHIGH) match the 'HIGH' region motif.

The protein belongs to the class-I aminoacyl-tRNA synthetase family. Glutamate--tRNA ligase type 2 subfamily.

Its subcellular location is the cytoplasm. It carries out the reaction tRNA(Glu) + L-glutamate + ATP = L-glutamyl-tRNA(Glu) + AMP + diphosphate. Catalyzes the attachment of glutamate to tRNA(Glu) in a two-step reaction: glutamate is first activated by ATP to form Glu-AMP and then transferred to the acceptor end of tRNA(Glu). The sequence is that of Glutamate--tRNA ligase from Thermoplasma volcanium (strain ATCC 51530 / DSM 4299 / JCM 9571 / NBRC 15438 / GSS1).